Here is a 145-residue protein sequence, read N- to C-terminus: MGVYSPAPRTPRGPWNIRIRFLSWSNSFLLEVKKNYGDVYLCDVCPVRPPGLQAPREQPVLHDRKVLHLYGQDSGVRDVQEVLWNPVSHQEVRRDNHGVLHGRRRARVRQAEEGRRRRQEGHRFRDWERLHQRVEGCPGLQGHGF.

This is an uncharacterized protein from Frog virus 3 (isolate Goorha) (FV-3).